Reading from the N-terminus, the 968-residue chain is Breast cancer anti-estrogen resistance protein 1 (968 aa).

At methionine 1 the chain carries N-acetylmethionine. An SH3 domain is found at 97 to 159; sequence DKNVLAKALY…PGNRLKILVG (63 aa). The disordered stretch occupies residues 164 to 277; it reads KPAAPGPGPP…GPGSPAQDIY (114 aa). Over residues 167-182 the composition is skewed to pro residues; the sequence is APGPGPPATPPQPQPS. A substrate for kinases region spans residues 213–514; sequence YLVPTPSKTQ…DGVYAVPPPA (302 aa). Tyrosine 226 is subject to Phosphotyrosine; by SRC. The segment covering 233 to 249 has biased composition (polar residues); sequence PQFQSPPAKQTSTFSKQ. Serine 237 bears the Phosphoserine mark. Tyrosine 332 carries the post-translational modification Phosphotyrosine. Phosphotyrosine; by ABL1 is present on tyrosine 347. A Phosphothreonine modification is found at threonine 367. At serine 390 the chain carries Phosphoserine. The interval 393–416 is disordered; that stretch reads KGLPPSNHHSVYDVPPSVSKDVPD. Tyrosine 460, tyrosine 470, and tyrosine 508 each carry phosphotyrosine. Disordered regions lie at residues 503 to 544 and 705 to 756; these read IDDG…SLEV and RTKA…NSEG. Over residues 514 to 524 the composition is skewed to basic and acidic residues; the sequence is AEREAPTDGKR. Positions 525–542 are enriched in low complexity; it reads LSASSTGSTRSSQSASSL. Serine 526, serine 535, and serine 737 each carry phosphoserine. The segment covering 715–753 has biased composition (polar residues); sequence GSSSLHLNPTDKASSIQSRPLPSPPKFTSQDSPDGQYEN. The SH3-binding motif lies at 733-741; that stretch reads RPLPSPPKF. Residues 844–894 form a divergent helix-loop-helix motif region; the sequence is FYLEQCEANLTTLTDAVDAFFTAVATNQPPKIFVAHSKFVILSAHKLVFIG.

Belongs to the CAS family. Forms complexes in vivo with PTK2/FAK1, adapter protein CRKL and LYN kinase. Can heterodimerize with NEDD9. Component of a complex comprised of SH2D3C, BCAR1/CAS, and CRK. Within the complex, interacts with SH2D3C (via C-terminus), and CRK. Part of a complex comprised of PTPRA, BCAR1, BCAR3 (via SH2 domain) and SRC; the formation of the complex is dependent on integrin mediated-tyrosine phosphorylation of PTPRA. Interacts with BCAR3 (via Ras-GEF domain); the interaction regulates adhesion-dependent serine phosphorylation. Interacts with SMAD2 and SMAD3. Interacts with NPHP1. Interacts with PTK2B/PYK2. Interacts (via C-terminus) with SH2D3C/CHAT isoform 2 (via C-terminus). Interacts with activated CSPG4. Interacts with BMX, INPPL1/SHIP2 and PEAK1. Part of a collagen stimulated complex involved in cell migration composed of CDC42, CRK, TNK2 and BCAR1/p130cas. Interacts with TNK2 via SH3 domains. Interacts with PTK2B/PYK2. Interacts (when tyrosine-phosphorylated) with tensin TNS1; the interaction is increased by phosphorylation of TNS1. PTK2/FAK1 activation mediates phosphorylation at the YDYVHL motif; phosphorylation is most likely catalyzed by SRC family members. SRC-family kinases are recruited to the phosphorylated sites and can phosphorylate other tyrosine residues. Tyrosine phosphorylation is triggered by integrin mediated adhesion of cells to the extracellular matrix. Post-translationally, phosphorylated by SRC kinase in a EDN1- and PTK2B-mediated manner; phosphorylation strengthens its interaction with BCAR3 as part of the PTK2B/BCAR1/BCAR3/RAP1 signaling pathway. In terms of processing, dephosphorylated by PTPN14 at Tyr-226. Widely expressed. Higher expression in lung, intestine and testis.

It is found in the cell junction. It localises to the focal adhesion. Its subcellular location is the cytoplasm. The protein resides in the cell projection. The protein localises to the axon. Functionally, docking protein which plays a central coordinating role for tyrosine-kinase-based signaling related to cell adhesion. Implicated in induction of cell migration and cell branching. Involved in the BCAR3-mediated inhibition of TGFB signaling. This Rattus norvegicus (Rat) protein is Breast cancer anti-estrogen resistance protein 1 (Bcar1).